Here is a 318-residue protein sequence, read N- to C-terminus: ATP synthase gamma chain (318 aa).

The protein belongs to the ATPase gamma chain family. In terms of assembly, F-type ATPases have 2 components, CF(1) - the catalytic core - and CF(0) - the membrane proton channel. CF(1) has five subunits: alpha(3), beta(3), gamma(1), delta(1), epsilon(1). CF(0) has three main subunits: a, b and c.

It is found in the cell membrane. In terms of biological role, produces ATP from ADP in the presence of a proton gradient across the membrane. The gamma chain is believed to be important in regulating ATPase activity and the flow of protons through the CF(0) complex. In Lactobacillus gasseri (strain ATCC 33323 / DSM 20243 / BCRC 14619 / CIP 102991 / JCM 1131 / KCTC 3163 / NCIMB 11718 / NCTC 13722 / AM63), this protein is ATP synthase gamma chain.